The chain runs to 840 residues: V-type proton ATPase subunit a, vacuolar isoform (840 aa).

At A2 the chain carries N-acetylalanine. At A2–E404 the chain is on the cytoplasmic side. Residues L117 to L145 adopt a coiled-coil conformation. Residues I405–F423 traverse the membrane as a helical segment. The Vacuolar portion of the chain corresponds to G424–D425. The chain crosses the membrane as a helical span at residues M426 to N442. Over E443–D456 the chain is Cytoplasmic. The helical transmembrane segment at M457–T486 threads the bilayer. Residues M487–S534 are Vacuolar-facing. A helical membrane pass occupies residues Y535–F554. The Cytoplasmic portion of the chain corresponds to S555–F572. A helical membrane pass occupies residues I573–K593. The Vacuolar portion of the chain corresponds to W594–F636. The chain crosses the membrane as a helical span at residues L637–F656. Topologically, residues K657 to T719 are cytoplasmic. A helical membrane pass occupies residues I720–A744. Over Q745 to V765 the chain is Vacuolar. A helical membrane pass occupies residues G766–E804. Topologically, residues S805–S840 are cytoplasmic.

This sequence belongs to the V-ATPase 116 kDa subunit family. V-ATPase is a heteromultimeric enzyme composed of a peripheral catalytic V1 complex (components A to H) attached to an integral membrane V0 proton pore complex (components: a, c, c', c'', d, e, f and VOA1). Post-translationally, glycosylated.

The protein resides in the vacuole membrane. In terms of biological role, subunit of the V0 complex of vacuolar(H+)-ATPase (V-ATPase), a multisubunit enzyme composed of a peripheral complex (V1) that hydrolyzes ATP and a membrane integral complex (V0) that translocates protons. V-ATPase is responsible for acidifying and maintaining the pH of intracellular compartments. Is present only in vacuolar V-ATPase complexes; enzymes containing this subunit have a 4-fold higher ratio of proton transport to ATP hydrolysis than complexes containing the Golgi/endosomal isoform and undergo reversible dissociation of V1 and V0 in response to glucose depletion. This Saccharomyces cerevisiae (strain ATCC 204508 / S288c) (Baker's yeast) protein is V-type proton ATPase subunit a, vacuolar isoform.